The chain runs to 348 residues: Holliday junction branch migration complex subunit RuvB (348 aa).

The tract at residues 1–184 (MTLNRDMVSP…FGIVQRLEFY (184 aa)) is large ATPase domain (RuvB-L). Residues Leu23, Arg24, Gly65, Lys68, Thr69, Thr70, Arg174, Tyr184, and Arg221 each contribute to the ATP site. Residue Thr69 coordinates Mg(2+). The interval 185 to 255 (AVDHLVLIVE…VAQKALDLLD (71 aa)) is small ATPAse domain (RuvB-S). Positions 258-348 (SHGFDTMDRK…QEVSDLFPNE (91 aa)) are head domain (RuvB-H). Arg294, Arg313, and Arg318 together coordinate DNA.

Belongs to the RuvB family. Homohexamer. Forms an RuvA(8)-RuvB(12)-Holliday junction (HJ) complex. HJ DNA is sandwiched between 2 RuvA tetramers; dsDNA enters through RuvA and exits via RuvB. An RuvB hexamer assembles on each DNA strand where it exits the tetramer. Each RuvB hexamer is contacted by two RuvA subunits (via domain III) on 2 adjacent RuvB subunits; this complex drives branch migration. In the full resolvosome a probable DNA-RuvA(4)-RuvB(12)-RuvC(2) complex forms which resolves the HJ.

It localises to the cytoplasm. It carries out the reaction ATP + H2O = ADP + phosphate + H(+). In terms of biological role, the RuvA-RuvB-RuvC complex processes Holliday junction (HJ) DNA during genetic recombination and DNA repair, while the RuvA-RuvB complex plays an important role in the rescue of blocked DNA replication forks via replication fork reversal (RFR). RuvA specifically binds to HJ cruciform DNA, conferring on it an open structure. The RuvB hexamer acts as an ATP-dependent pump, pulling dsDNA into and through the RuvAB complex. RuvB forms 2 homohexamers on either side of HJ DNA bound by 1 or 2 RuvA tetramers; 4 subunits per hexamer contact DNA at a time. Coordinated motions by a converter formed by DNA-disengaged RuvB subunits stimulates ATP hydrolysis and nucleotide exchange. Immobilization of the converter enables RuvB to convert the ATP-contained energy into a lever motion, pulling 2 nucleotides of DNA out of the RuvA tetramer per ATP hydrolyzed, thus driving DNA branch migration. The RuvB motors rotate together with the DNA substrate, which together with the progressing nucleotide cycle form the mechanistic basis for DNA recombination by continuous HJ branch migration. Branch migration allows RuvC to scan DNA until it finds its consensus sequence, where it cleaves and resolves cruciform DNA. The sequence is that of Holliday junction branch migration complex subunit RuvB from Nitrosococcus oceani (strain ATCC 19707 / BCRC 17464 / JCM 30415 / NCIMB 11848 / C-107).